The primary structure comprises 817 residues: DNA ligase (817 aa).

NAD(+)-binding positions include 45-49 (DVEYD), 94-95 (SI), and Glu131. Lys133 acts as the N6-AMP-lysine intermediate in catalysis. NAD(+) contacts are provided by Arg154, Glu193, Lys311, and Lys335. Residues Cys444, Cys447, Cys462, and Cys468 each coordinate Zn(2+). In terms of domain architecture, BRCT spans 733-817 (AEEGVLDGKT…LLKKPAGDQA (85 aa)).

Belongs to the NAD-dependent DNA ligase family. LigA subfamily. Mg(2+) serves as cofactor. Requires Mn(2+) as cofactor.

It catalyses the reaction NAD(+) + (deoxyribonucleotide)n-3'-hydroxyl + 5'-phospho-(deoxyribonucleotide)m = (deoxyribonucleotide)n+m + AMP + beta-nicotinamide D-nucleotide.. DNA ligase that catalyzes the formation of phosphodiester linkages between 5'-phosphoryl and 3'-hydroxyl groups in double-stranded DNA using NAD as a coenzyme and as the energy source for the reaction. It is essential for DNA replication and repair of damaged DNA. This chain is DNA ligase, found in Ralstonia pickettii (strain 12J).